A 197-amino-acid chain; its full sequence is Imidazoleglycerol-phosphate dehydratase (197 aa).

This sequence belongs to the imidazoleglycerol-phosphate dehydratase family.

The protein localises to the cytoplasm. It carries out the reaction D-erythro-1-(imidazol-4-yl)glycerol 3-phosphate = 3-(imidazol-4-yl)-2-oxopropyl phosphate + H2O. Its pathway is amino-acid biosynthesis; L-histidine biosynthesis; L-histidine from 5-phospho-alpha-D-ribose 1-diphosphate: step 6/9. In Methanocaldococcus jannaschii (strain ATCC 43067 / DSM 2661 / JAL-1 / JCM 10045 / NBRC 100440) (Methanococcus jannaschii), this protein is Imidazoleglycerol-phosphate dehydratase.